The sequence spans 570 residues: Urease subunit alpha (570 aa).

The region spanning 132–570 (GGFDSHIHYI…LPLAQRYFLF (439 aa)) is the Urease domain. Residues His137, His139, and Lys220 each contribute to the Ni(2+) site. Lys220 is subject to N6-carboxylysine. Residue His222 coordinates substrate. Residues His249 and His275 each contribute to the Ni(2+) site. His323 acts as the Proton donor in catalysis. Asp363 is a Ni(2+) binding site.

This sequence belongs to the metallo-dependent hydrolases superfamily. Urease alpha subunit family. In terms of assembly, heterotrimer of UreA (gamma), UreB (beta) and UreC (alpha) subunits. Three heterotrimers associate to form the active enzyme. The cofactor is Ni cation. Post-translationally, carboxylation allows a single lysine to coordinate two nickel ions.

The protein localises to the cytoplasm. It catalyses the reaction urea + 2 H2O + H(+) = hydrogencarbonate + 2 NH4(+). Its pathway is nitrogen metabolism; urea degradation; CO(2) and NH(3) from urea (urease route): step 1/1. This chain is Urease subunit alpha, found in Ruegeria sp. (strain TM1040) (Silicibacter sp.).